The chain runs to 24 residues: Coenzyme PQQ synthesis protein A (24 aa).

The pyrroloquinoline quinone (Glu-Tyr) cross-link spans 16 to 20 (EVTMY).

Belongs to the PqqA family.

Its pathway is cofactor biosynthesis; pyrroloquinoline quinone biosynthesis. In terms of biological role, required for coenzyme pyrroloquinoline quinone (PQQ) biosynthesis. PQQ is probably formed by cross-linking a specific glutamate to a specific tyrosine residue and excising these residues from the peptide. In Pseudomonas syringae pv. syringae (strain B728a), this protein is Coenzyme PQQ synthesis protein A.